We begin with the raw amino-acid sequence, 766 residues long: 5-methyltetrahydropteroyltriglutamate--homocysteine methyltransferase (766 aa).

Residues 16-19 (RELK) and Lys-119 contribute to the 5-methyltetrahydropteroyltri-L-glutamate site. L-homocysteine is bound by residues 440-442 (IGS) and Glu-493. Residues 440–442 (IGS) and Glu-493 contribute to the L-methionine site. 5-methyltetrahydropteroyltri-L-glutamate is bound by residues 524 to 525 (RC) and Trp-570. An L-homocysteine-binding site is contributed by Asp-608. Position 608 (Asp-608) interacts with L-methionine. Glu-614 is a binding site for 5-methyltetrahydropteroyltri-L-glutamate. The Zn(2+) site is built by His-650, Cys-652, and Glu-674. His-703 acts as the Proton donor in catalysis. Cys-735 contributes to the Zn(2+) binding site.

Belongs to the vitamin-B12 independent methionine synthase family. Zn(2+) serves as cofactor.

It carries out the reaction 5-methyltetrahydropteroyltri-L-glutamate + L-homocysteine = tetrahydropteroyltri-L-glutamate + L-methionine. It participates in amino-acid biosynthesis; L-methionine biosynthesis via de novo pathway; L-methionine from L-homocysteine (MetE route): step 1/1. Functionally, catalyzes the transfer of a methyl group from 5-methyltetrahydrofolate to homocysteine resulting in methionine formation. This is 5-methyltetrahydropteroyltriglutamate--homocysteine methyltransferase from Pseudomonas aeruginosa (strain UCBPP-PA14).